The following is a 560-amino-acid chain: Protein DA1-related 7 (560 aa).

3 UIM domains span residues 43 to 62, 92 to 111, and 155 to 174; these read SEAD…QETS, EEDQ…KGKS, and NEDA…KGQI. One can recognise an LIM zinc-binding domain in the interval 199-269; that stretch reads SICDGCKSAI…HVCKKKFPGR (71 aa).

As to quaternary structure, interacts with ubiquitin.

Functionally, ubiquitin receptor that probably regulates developmental process. In Arabidopsis thaliana (Mouse-ear cress), this protein is Protein DA1-related 7 (DAR7).